The following is a 139-amino-acid chain: Lysozyme (139 aa).

An N-terminal signal peptide occupies residues 1–19; sequence MTKYVILLAVLAFALHCDA. The 120-residue stretch at 20-139 folds into the C-type lysozyme domain; sequence KRFTRCGLVQ…QHGLPDISDC (120 aa). Disulfide bonds link C25-C139, C46-C129, C81-C95, and C91-C109. Catalysis depends on residues E51 and D69.

The protein belongs to the glycosyl hydrolase 22 family.

The catalysed reaction is Hydrolysis of (1-&gt;4)-beta-linkages between N-acetylmuramic acid and N-acetyl-D-glucosamine residues in a peptidoglycan and between N-acetyl-D-glucosamine residues in chitodextrins.. Lysozymes have primarily a bacteriolytic function; those in tissues and body fluids are associated with the monocyte-macrophage system and enhance the activity of immunoagents. This Hyalophora cecropia (Cecropia moth) protein is Lysozyme.